A 279-amino-acid chain; its full sequence is HTH-type transcriptional regulator HdfR (279 aa).

Residues 1-58 (MDTELLKTFLEVSRTRHFGRAAESLYLTQSAVSFRIRQLENQLGVNLFTRHRNNIRLT) form the HTH lysR-type domain. The H-T-H motif DNA-binding region spans 18-37 (FGRAAESLYLTQSAVSFRIR).

It belongs to the LysR transcriptional regulatory family.

In terms of biological role, negatively regulates the transcription of the flagellar master operon flhDC by binding to the upstream region of the operon. The chain is HTH-type transcriptional regulator HdfR from Escherichia coli (strain SE11).